A 198-amino-acid polypeptide reads, in one-letter code: GTP-binding protein Di-Ras1 (198 aa).

Residues 17 to 22, 33 to 39, 61 to 65, 121 to 125, Ala-151, and 151 to 152 each bind GTP; these read GVGKSS, RDTYIPT, DTTGS, NKCDE, and AK. Positions 36–44 match the Effector region motif; the sequence is YIPTIEDTY. A Cysteine methyl ester modification is found at Cys-195. Cys-195 is lipidated: S-geranylgeranyl cysteine. Positions 196–198 are cleaved as a propeptide — removed in mature form; it reads ALM.

The protein belongs to the small GTPase superfamily. Di-Ras family.

The protein resides in the cell membrane. Displays low GTPase activity and exists predominantly in the GTP-bound form. This is GTP-binding protein Di-Ras1 (Diras1) from Mus musculus (Mouse).